The following is a 277-amino-acid chain: Large ribosomal subunit protein uL2 (277 aa).

Positions 211–277 are disordered; the sequence is SRWKGVRPTV…KLIVRGRKKK (67 aa).

It belongs to the universal ribosomal protein uL2 family. In terms of assembly, part of the 50S ribosomal subunit. Forms a bridge to the 30S subunit in the 70S ribosome.

Functionally, one of the primary rRNA binding proteins. Required for association of the 30S and 50S subunits to form the 70S ribosome, for tRNA binding and peptide bond formation. It has been suggested to have peptidyltransferase activity; this is somewhat controversial. Makes several contacts with the 16S rRNA in the 70S ribosome. This is Large ribosomal subunit protein uL2 from Staphylococcus epidermidis (strain ATCC 35984 / DSM 28319 / BCRC 17069 / CCUG 31568 / BM 3577 / RP62A).